Consider the following 380-residue polypeptide: Probable protein phosphatase 2C 2 (380 aa).

Residues 69–339 (RSGSFADIGP…DNLTVIVICF (271 aa)) form the PPM-type phosphatase domain. Mn(2+)-binding residues include D113, G114, D287, and D330.

The protein belongs to the PP2C family. Mg(2+) is required as a cofactor. Requires Mn(2+) as cofactor.

It carries out the reaction O-phospho-L-seryl-[protein] + H2O = L-seryl-[protein] + phosphate. The enzyme catalyses O-phospho-L-threonyl-[protein] + H2O = L-threonyl-[protein] + phosphate. This Oryza sativa subsp. japonica (Rice) protein is Probable protein phosphatase 2C 2.